Consider the following 198-residue polypeptide: Basic helix-loop-helix transcription factor amos (198 aa).

Positions 76–131 (EQQQHHLQANPLGKNQGRSPRYWNKQQRSKPYDKLSTSMSSSTSSASSSSSSSAGF) are disordered. Positions 111–129 (STSMSSSTSSASSSSSSSA) are enriched in low complexity. Residues 138 to 190 (KRRLAANARERRRMNSLNDAFDKLRDVVPSLGHDRRLSKYETLQMAQAYIGDL) form the bHLH domain.

As to quaternary structure, efficient DNA binding requires dimerization with another bHLH protein. Interacts with Daughterless (da). As to expression, during embryonic development, expression is seen in a small cluster of ectodermal cells during stage 10 which becomes restricted to 1 cell by stage 11. Expression is lost from this cell in the thorax and then the abdomen. Later expression is restricted to sensory organ precursors. Very transient expression was detected in distal leg disks at approximately 0-4 hours after puparium formation (APF), correlating with the anlage of the innervated tarsal claw.

The protein resides in the nucleus. Its function is as follows. Transcription factor involved in early neurogenesis; sensillum basiconica formation and maybe sensillum trichodea development. Promotes multiple dendritic (MD) neuron formation. Required for olfactory sensilla; regulated by lozenge (lz). The protein is Basic helix-loop-helix transcription factor amos (amos) of Drosophila melanogaster (Fruit fly).